Consider the following 146-residue polypeptide: Large-conductance mechanosensitive channel (146 aa).

The next 2 membrane-spanning stretches (helical) occupy residues Val-14–Leu-34 and Gly-81–Val-101.

Belongs to the MscL family. Homopentamer.

Its subcellular location is the cell membrane. Functionally, channel that opens in response to stretch forces in the membrane lipid bilayer. May participate in the regulation of osmotic pressure changes within the cell. The chain is Large-conductance mechanosensitive channel from Symbiobacterium thermophilum (strain DSM 24528 / JCM 14929 / IAM 14863 / T).